The sequence spans 100 residues: Probable DNA-binding protein HU (100 aa).

Belongs to the bacterial histone-like protein family.

Its function is as follows. Histone-like DNA-binding protein which is capable of wrapping DNA to stabilize it, and thus to prevent its denaturation under extreme environmental conditions. The protein is Probable DNA-binding protein HU (hup) of Chlamydia pneumoniae (Chlamydophila pneumoniae).